We begin with the raw amino-acid sequence, 379 residues long: Forkhead box protein E1 (379 aa).

Residues 1-11 (MTAESQQSPTR) show a composition bias toward polar residues. Residues 1 to 65 (MTAESQQSPT…RRRKRPLQKG (65 aa)) are disordered. The segment covering 54-63 (KGRRRKRPLQ) has biased composition (basic residues). A DNA-binding region (fork-head) is located at residues 66-160 (KPPYSYIALI…DSGSFLRRRK (95 aa)). The tract at residues 239 to 265 (HSGSEHAQPPNRSISPEVNSTSSSSCN) is disordered. The span at 251–265 (SISPEVNSTSSSSCN) shows a compositional bias: low complexity.

In terms of tissue distribution, first expressed at late neural tube and early tailbud stages in the hypophyseal placode. Expression continues in the developing pituitary at late tailbud stages. As development progresses, expressed in the mesoderm of the branchial arches. At stage 38, expressed in the developing thyroid and in the pharyngeal endoderm.

It localises to the nucleus. Functionally, transcription factor that binds consensus sites on a variety of gene promoters and activate their transcription. In Xenopus laevis (African clawed frog), this protein is Forkhead box protein E1.